We begin with the raw amino-acid sequence, 323 residues long: MNYLTTTNYCFPCQTHLYHGKVRDVYTVGSDMLVIIATDRISAFDVVLSRGIPYKGQVLNQIAAKFLDSTSDILPNWKLAEPDPMVTIGLLCEPFKVEMVIRGYLTGSAWRKYKEGERTLCAVTLPEGMKENEKFPNPIITPTTKAYKGHDENISKEEIIERFLVSKEDYEQLEYYTRALFQRGTEIASSKGLILVDTKYEFGKKDGRIYLIDEIHTPDSSRYFYSEDYQERFEKGEGQKQLSKEFVRQWLMKQNFQGKEGQIVPEMTPEYCQIVSERYIELYETIVGEQFIRASTSNISARIKKNIETYLMNKEQVKWNNMV.

Belongs to the SAICAR synthetase family.

It catalyses the reaction 5-amino-1-(5-phospho-D-ribosyl)imidazole-4-carboxylate + L-aspartate + ATP = (2S)-2-[5-amino-1-(5-phospho-beta-D-ribosyl)imidazole-4-carboxamido]succinate + ADP + phosphate + 2 H(+). It participates in purine metabolism; IMP biosynthesis via de novo pathway; 5-amino-1-(5-phospho-D-ribosyl)imidazole-4-carboxamide from 5-amino-1-(5-phospho-D-ribosyl)imidazole-4-carboxylate: step 1/2. This chain is Phosphoribosylaminoimidazole-succinocarboxamide synthase, found in Azobacteroides pseudotrichonymphae genomovar. CFP2.